The following is a 156-amino-acid chain: ATP synthase subunit b (156 aa).

The chain crosses the membrane as a helical span at residues 11 to 31 (AIAFVLFVLFCMKYVWPPLMA).

Belongs to the ATPase B chain family. In terms of assembly, F-type ATPases have 2 components, F(1) - the catalytic core - and F(0) - the membrane proton channel. F(1) has five subunits: alpha(3), beta(3), gamma(1), delta(1), epsilon(1). F(0) has three main subunits: a(1), b(2) and c(10-14). The alpha and beta chains form an alternating ring which encloses part of the gamma chain. F(1) is attached to F(0) by a central stalk formed by the gamma and epsilon chains, while a peripheral stalk is formed by the delta and b chains.

It is found in the cell inner membrane. In terms of biological role, f(1)F(0) ATP synthase produces ATP from ADP in the presence of a proton or sodium gradient. F-type ATPases consist of two structural domains, F(1) containing the extramembraneous catalytic core and F(0) containing the membrane proton channel, linked together by a central stalk and a peripheral stalk. During catalysis, ATP synthesis in the catalytic domain of F(1) is coupled via a rotary mechanism of the central stalk subunits to proton translocation. Component of the F(0) channel, it forms part of the peripheral stalk, linking F(1) to F(0). This is ATP synthase subunit b from Shigella boydii serotype 18 (strain CDC 3083-94 / BS512).